We begin with the raw amino-acid sequence, 158 residues long: NAD(P)H-quinone oxidoreductase subunit N (158 aa).

The protein belongs to the complex I NdhN subunit family. As to quaternary structure, NDH-1 can be composed of about 15 different subunits; different subcomplexes with different compositions have been identified which probably have different functions.

It is found in the cellular thylakoid membrane. It catalyses the reaction a plastoquinone + NADH + (n+1) H(+)(in) = a plastoquinol + NAD(+) + n H(+)(out). The catalysed reaction is a plastoquinone + NADPH + (n+1) H(+)(in) = a plastoquinol + NADP(+) + n H(+)(out). Functionally, NDH-1 shuttles electrons from an unknown electron donor, via FMN and iron-sulfur (Fe-S) centers, to quinones in the respiratory and/or the photosynthetic chain. The immediate electron acceptor for the enzyme in this species is believed to be plastoquinone. Couples the redox reaction to proton translocation, and thus conserves the redox energy in a proton gradient. Cyanobacterial NDH-1 also plays a role in inorganic carbon-concentration. This is NAD(P)H-quinone oxidoreductase subunit N from Prochlorococcus marinus (strain MIT 9312).